An 893-amino-acid chain; its full sequence is DNA gyrase subunit A (893 aa).

In terms of domain architecture, Topo IIA-type catalytic spans 35 to 501; the sequence is LPDVRDGLKP…GLEDLEDEDL (467 aa). The O-(5'-phospho-DNA)-tyrosine intermediate role is filled by Tyr-123. The GyrA-box motif lies at 528–534; that stretch reads QNRGGRG. Positions 810–893 are disordered; it reads VNEEDDNEEN…ASDNEEDSDE (84 aa). Composition is skewed to acidic residues over residues 812-821 and 852-862; these read EEDDNEENAD and DAEMESVESPE. The segment covering 863-879 has biased composition (basic and acidic residues); the sequence is NDDRIDIRQDFMDRVNE. Residues 880–893 are compositionally biased toward acidic residues; it reads DIESASDNEEDSDE.

Belongs to the type II topoisomerase GyrA/ParC subunit family. In terms of assembly, heterotetramer, composed of two GyrA and two GyrB chains. In the heterotetramer, GyrA contains the active site tyrosine that forms a transient covalent intermediate with DNA, while GyrB binds cofactors and catalyzes ATP hydrolysis.

Its subcellular location is the cytoplasm. It catalyses the reaction ATP-dependent breakage, passage and rejoining of double-stranded DNA.. A type II topoisomerase that negatively supercoils closed circular double-stranded (ds) DNA in an ATP-dependent manner to modulate DNA topology and maintain chromosomes in an underwound state. Negative supercoiling favors strand separation, and DNA replication, transcription, recombination and repair, all of which involve strand separation. Also able to catalyze the interconversion of other topological isomers of dsDNA rings, including catenanes and knotted rings. Type II topoisomerases break and join 2 DNA strands simultaneously in an ATP-dependent manner. In Staphylococcus epidermidis (strain ATCC 12228 / FDA PCI 1200), this protein is DNA gyrase subunit A.